We begin with the raw amino-acid sequence, 336 residues long: Glycerol-3-phosphate dehydrogenase [NAD(P)+] (336 aa).

NADPH-binding residues include Ser-14, Trp-15, Arg-35, Arg-36, and Lys-109. Lys-109 and Gly-139 together coordinate sn-glycerol 3-phosphate. NADPH is bound at residue Ala-143. Sn-glycerol 3-phosphate contacts are provided by Lys-194, Asp-247, Ser-257, Arg-258, and Asn-259. The Proton acceptor role is filled by Lys-194. Arg-258 is an NADPH binding site. Glu-284 serves as a coordination point for NADPH.

It belongs to the NAD-dependent glycerol-3-phosphate dehydrogenase family.

It is found in the cytoplasm. It catalyses the reaction sn-glycerol 3-phosphate + NAD(+) = dihydroxyacetone phosphate + NADH + H(+). It carries out the reaction sn-glycerol 3-phosphate + NADP(+) = dihydroxyacetone phosphate + NADPH + H(+). It participates in membrane lipid metabolism; glycerophospholipid metabolism. Its function is as follows. Catalyzes the reduction of the glycolytic intermediate dihydroxyacetone phosphate (DHAP) to sn-glycerol 3-phosphate (G3P), the key precursor for phospholipid synthesis. This is Glycerol-3-phosphate dehydrogenase [NAD(P)+] from Streptomyces avermitilis (strain ATCC 31267 / DSM 46492 / JCM 5070 / NBRC 14893 / NCIMB 12804 / NRRL 8165 / MA-4680).